The following is a 234-amino-acid chain: Coiled-coil domain-containing protein 194 (234 aa).

Positions 1–42 (MAEPGPEPGRAWRVLALCGVAVFLAAAAAGGALVAWNLAASA) are cleaved as a signal peptide. Disordered regions lie at residues 44–67 (RGPR…PGVD) and 187–234 (VLEA…RARG). A coiled-coil region spans residues 66 to 163 (VDDLRRRLAE…TRRLDEALRR (98 aa)). The segment covering 187-196 (VLEAEMSPQR) has biased composition (low complexity). Positions 197–217 (RVPRPRPRSGSRPRPSPRSRS) are enriched in basic residues.

The polypeptide is Coiled-coil domain-containing protein 194 (Homo sapiens (Human)).